Consider the following 146-residue polypeptide: Holo-[acyl-carrier-protein] synthase (146 aa).

Positions 9 and 63 each coordinate Mg(2+).

It belongs to the P-Pant transferase superfamily. AcpS family. Requires Mg(2+) as cofactor.

The protein localises to the cytoplasm. It carries out the reaction apo-[ACP] + CoA = holo-[ACP] + adenosine 3',5'-bisphosphate + H(+). In terms of biological role, transfers the 4'-phosphopantetheine moiety from coenzyme A to a Ser of acyl-carrier-protein. This is Holo-[acyl-carrier-protein] synthase from Burkholderia ambifaria (strain MC40-6).